The chain runs to 101 residues: CRISPR-associated endoribonuclease Cas2 (101 aa).

D8 is a binding site for Mg(2+).

This sequence belongs to the CRISPR-associated endoribonuclease Cas2 protein family. As to quaternary structure, homodimer, forms a heterotetramer with a Cas1 homodimer. It depends on Mg(2+) as a cofactor.

Functionally, CRISPR (clustered regularly interspaced short palindromic repeat), is an adaptive immune system that provides protection against mobile genetic elements (viruses, transposable elements and conjugative plasmids). CRISPR clusters contain sequences complementary to antecedent mobile elements and target invading nucleic acids. CRISPR clusters are transcribed and processed into CRISPR RNA (crRNA). Functions as a ssRNA-specific endoribonuclease. Involved in the integration of spacer DNA into the CRISPR cassette. The polypeptide is CRISPR-associated endoribonuclease Cas2 (Ligilactobacillus salivarius (strain UCC118) (Lactobacillus salivarius)).